A 1352-amino-acid chain; its full sequence is Ubiquitin carboxyl-terminal hydrolase 31 (1352 aa).

The span at 1–16 shows a compositional bias: low complexity; the sequence is MSKVTAPGSGPPAAAS. 2 disordered regions span residues 1–62 and 79–119; these read MSKV…RSVG and SSEG…PPAC. A compositionally biased stretch (gly residues) spans 32-43; it reads RAGGGGAGGPGA. Residues 44–62 show a composition bias toward low complexity; that stretch reads SGPAAPSSPSSPSSARSVG. A compositionally biased stretch (pro residues) spans 95–117; the sequence is PPGPAAAPTPPPCPPPPASPAPP. The region spanning 128 to 765 is the USP domain; it reads AGLRNHGNTC…TAYILFYQRR (638 aa). Residue C137 is the Nucleophile of the active site. The segment at 162-185 is disordered; the sequence is RAGRPEPSPDPEQPAGRGAQGQGE. The Proton acceptor role is filled by H723. Disordered stretches follow at residues 812-835, 919-939, and 951-1352; these read LASLSESVEMTGERSEDDGGFSTR, SSSYQEPSDSHSRREHKAVGR, and DESD…QKPQ. Residues 958-970 are compositionally biased toward polar residues; the sequence is LNSSVVDTQSKHS. 4 stretches are compositionally biased toward low complexity: residues 992–1001, 1051–1070, 1078–1089, and 1101–1138; these read VDQSDSVDSS, SSLSSTSPSSPLPVKVSLKP, DSSSRGSGRHSS, and PKSQDSVSSPSPQKQKSASALTYTASSTSAKKASGPAT. A compositionally biased stretch (basic and acidic residues) spans 1148-1159; it reads RTSDHSLSREGS. Over residues 1160 to 1181 the composition is skewed to polar residues; that stretch reads RQSLGSDRASATSTSKPNSPRV. Low complexity predominate over residues 1198–1210; the sequence is SSSMASLRSPSTS. Basic and acidic residues-rich tracts occupy residues 1215-1225 and 1234-1243; these read LKRDSKSEDKG and RQKETRRSTD. Residues 1251-1264 show a composition bias toward low complexity; that stretch reads SKKAGGSSVKSVCK. K1264 carries the post-translational modification N6-acetyllysine. Composition is skewed to polar residues over residues 1278-1290 and 1341-1352; these read PASQQPNANTTGK and MQTSARPSQKPQ.

It belongs to the peptidase C19 family. Post-translationally, acetylated at Lys-1264. Acetylation decreases activity. Deacetylated by SIRT1. In terms of tissue distribution, widely expressed.

It carries out the reaction Thiol-dependent hydrolysis of ester, thioester, amide, peptide and isopeptide bonds formed by the C-terminal Gly of ubiquitin (a 76-residue protein attached to proteins as an intracellular targeting signal).. Its function is as follows. Deubiquitinase that recognizes and hydrolyzes the peptide bond at the C-terminal Gly of ubiquitin. May play a role in the regulation of NF-kappa-B signaling pathway by deubiquitinating TRAF2. In terms of biological role, (Microbial infection) Plays a positive role in foot-and-mouth disease and classical swine fever viral infection. Mechanistically, associates with internal ribosomal entry site (IRES) element within the 5'-untranslated region of viral genomes to promote translation of the virus-encoded polyprotein. This is Ubiquitin carboxyl-terminal hydrolase 31 (USP31) from Homo sapiens (Human).